The chain runs to 477 residues: Glutamate--tRNA ligase (477 aa).

The short motif at 8 to 18 is the 'HIGH' region element; it reads PSPTGTLHIGT. The 'KMSKS' region motif lies at 247–251; that stretch reads KLSKR. ATP is bound at residue Lys-250.

It belongs to the class-I aminoacyl-tRNA synthetase family. Glutamate--tRNA ligase type 1 subfamily. In terms of assembly, monomer.

Its subcellular location is the cytoplasm. It carries out the reaction tRNA(Glu) + L-glutamate + ATP = L-glutamyl-tRNA(Glu) + AMP + diphosphate. Its function is as follows. Catalyzes the attachment of glutamate to tRNA(Glu) in a two-step reaction: glutamate is first activated by ATP to form Glu-AMP and then transferred to the acceptor end of tRNA(Glu). This is Glutamate--tRNA ligase from Synechococcus sp. (strain CC9605).